A 393-amino-acid polypeptide reads, in one-letter code: Protein TsgA (393 aa).

Residues 1-10 (MTNSNRIKLT) lie on the Cytoplasmic side of the membrane. Residues 11-31 (WISFLSYALTGALVIVTGMVM) form a helical membrane-spanning segment. At 32–50 (GNIADYFHLPVSSMSNTFT) the chain is on the periplasmic side. Residues 51 to 71 (FLNAGILISIFLNAWLMEIIP) form a helical membrane-spanning segment. Residues 72-77 (LKTQLR) lie on the Cytoplasmic side of the membrane. A helical transmembrane segment spans residues 78 to 98 (FGFILMVLAVAGLMFGHSLAL). Topologically, residues 99–100 (FS) are periplasmic. The chain crosses the membrane as a helical span at residues 101–121 (AAMFVLGLVSGITMSIGTFLI). Topologically, residues 122–133 (TQLYEGRQRGSR) are cytoplasmic. Residues 134-154 (LLFTDSFFSMAGMIFPMVAAF) traverse the membrane as a helical segment. Over 155-161 (LLARSIE) the chain is Periplasmic. The chain crosses the membrane as a helical span at residues 162–182 (WYWVYACIGLVYLAIFILTFG). The Cytoplasmic portion of the chain corresponds to 183–205 (CEFPALGKHAQHSQAPVVKEKWG). The helical transmembrane segment at 206–226 (IGVLFLAVAALCYILGQLGFI) threads the bilayer. The Periplasmic segment spans residues 227-244 (SWVPEYAKGLGMSLNDAG). The helical transmembrane segment at 245–265 (ALVSDFWMSYMFGMWAFSFIL) threads the bilayer. At 266 to 272 (RFFDLQR) the chain is on the cytoplasmic side. The helical transmembrane segment at 273–293 (ILTVLAGMAAVLMYLFITGTQ) threads the bilayer. At 294–297 (AHMP) the chain is on the periplasmic side. A helical transmembrane segment spans residues 298 to 318 (WFILTLGFFSSAIYTSIITLG). Residues 319–331 (SQQTKVASPKLVN) lie on the Cytoplasmic side of the membrane. A helical transmembrane segment spans residues 332–352 (FILTCGTIGTMLTFVVTGPIV). Topologically, residues 353–360 (AHSGPQAA) are periplasmic. A helical membrane pass occupies residues 361-381 (LLTANGLYAVVFVMCFALGFV). Residues 382–393 (SRHRQHSAPATH) lie on the Cytoplasmic side of the membrane.

It belongs to the major facilitator superfamily. TsgA family.

The protein resides in the cell inner membrane. The protein is Protein TsgA of Salmonella choleraesuis (strain SC-B67).